A 260-amino-acid polypeptide reads, in one-letter code: 4-hydroxy-tetrahydrodipicolinate reductase (260 aa).

NAD(+) contacts are provided by residues 8 to 13 (GAAGRM), Glu35, 91 to 93 (GTT), and 115 to 118 (APNM). The Proton donor/acceptor role is filled by His148. A (S)-2,3,4,5-tetrahydrodipicolinate-binding site is contributed by His149. Lys152 acts as the Proton donor in catalysis. 158–159 (GT) contacts (S)-2,3,4,5-tetrahydrodipicolinate.

The protein belongs to the DapB family.

The protein resides in the cytoplasm. It carries out the reaction (S)-2,3,4,5-tetrahydrodipicolinate + NAD(+) + H2O = (2S,4S)-4-hydroxy-2,3,4,5-tetrahydrodipicolinate + NADH + H(+). It catalyses the reaction (S)-2,3,4,5-tetrahydrodipicolinate + NADP(+) + H2O = (2S,4S)-4-hydroxy-2,3,4,5-tetrahydrodipicolinate + NADPH + H(+). It functions in the pathway amino-acid biosynthesis; L-lysine biosynthesis via DAP pathway; (S)-tetrahydrodipicolinate from L-aspartate: step 4/4. In terms of biological role, catalyzes the conversion of 4-hydroxy-tetrahydrodipicolinate (HTPA) to tetrahydrodipicolinate. This is 4-hydroxy-tetrahydrodipicolinate reductase from Rubrobacter xylanophilus (strain DSM 9941 / JCM 11954 / NBRC 16129 / PRD-1).